A 430-amino-acid chain; its full sequence is MKVHIFTYGCQMNENDSEIVKQLLKDEGIELTDDENDADVVILNTCAVRKKSEEKVYSHIGKLRKKGKKIGIMGCVAEKEKENLFKRGVSFVIGTRALTKVPDAVLNAKNGNKQIYLEDTLDEIEYHKVETRSSNHHAWVTIIHGCDRFCTYCIVPYTRGREKSRPIDEVLKEVESLSQRGYKEFTFLGQNVDAYGKDLRDGTSLAKLLKLASQIDNVKRLWFLTSYPTDFSLEIPKVMLESEKVARSIHLPVQHGSDKILKAMNRRYTRQEYIDLINEIRKIVPDASISSDIIVGFPGENDEDFEATVELVKLLKFERLNLAVYSPREGTVAWKYLKDDVPYQVKVRRMSYLLNLQKTINKELNKSYLGKEVEVIVEAQAKNGLFYGRDIRNKIISFEANPESIGKNVIVKVNKISAGPLYGEIKKILD.

An MTTase N-terminal domain is found at 1 to 110 (MKVHIFTYGC…VPDAVLNAKN (110 aa)). The [4Fe-4S] cluster site is built by Cys10, Cys46, Cys75, Cys146, Cys150, and Cys153. The Radical SAM core domain maps to 132–363 (RSSNHHAWVT…LNLQKTINKE (232 aa)). Residues 366–427 (KSYLGKEVEV…AGPLYGEIKK (62 aa)) enclose the TRAM domain.

The protein belongs to the methylthiotransferase family. MiaB subfamily. Monomer. It depends on [4Fe-4S] cluster as a cofactor.

The protein resides in the cytoplasm. It catalyses the reaction N(6)-dimethylallyladenosine(37) in tRNA + (sulfur carrier)-SH + AH2 + 2 S-adenosyl-L-methionine = 2-methylsulfanyl-N(6)-dimethylallyladenosine(37) in tRNA + (sulfur carrier)-H + 5'-deoxyadenosine + L-methionine + A + S-adenosyl-L-homocysteine + 2 H(+). In terms of biological role, catalyzes the methylthiolation of N6-(dimethylallyl)adenosine (i(6)A), leading to the formation of 2-methylthio-N6-(dimethylallyl)adenosine (ms(2)i(6)A) at position 37 in tRNAs that read codons beginning with uridine. In Fervidobacterium nodosum (strain ATCC 35602 / DSM 5306 / Rt17-B1), this protein is tRNA-2-methylthio-N(6)-dimethylallyladenosine synthase.